The following is a 302-amino-acid chain: Light-independent protochlorophyllide reductase iron-sulfur ATP-binding protein (302 aa).

Residues 46–51 and K75 each bind ATP; that span reads GIGKST. S50 provides a ligand contact to Mg(2+). 2 residues coordinate [4Fe-4S] cluster: C131 and C165. 216 to 217 is an ATP binding site; the sequence is NR.

This sequence belongs to the NifH/BchL/ChlL family. In terms of assembly, homodimer. Protochlorophyllide reductase is composed of three subunits; BchL, BchN and BchB. [4Fe-4S] cluster is required as a cofactor.

The enzyme catalyses chlorophyllide a + oxidized 2[4Fe-4S]-[ferredoxin] + 2 ADP + 2 phosphate = protochlorophyllide a + reduced 2[4Fe-4S]-[ferredoxin] + 2 ATP + 2 H2O. It functions in the pathway porphyrin-containing compound metabolism; bacteriochlorophyll biosynthesis (light-independent). Functionally, component of the dark-operative protochlorophyllide reductase (DPOR) that uses Mg-ATP and reduced ferredoxin to reduce ring D of protochlorophyllide (Pchlide) to form chlorophyllide a (Chlide). This reaction is light-independent. The L component serves as a unique electron donor to the NB-component of the complex, and binds Mg-ATP. The polypeptide is Light-independent protochlorophyllide reductase iron-sulfur ATP-binding protein (Methylocella silvestris (strain DSM 15510 / CIP 108128 / LMG 27833 / NCIMB 13906 / BL2)).